The sequence spans 261 residues: Thiamine thiazole synthase (261 aa).

Residues Ser-40, 59–60 (ER), Gly-67, Val-133, and 159–161 (HVD) each bind NAD(+). Residues Asp-161 and His-176 each contribute to the Fe cation site. Positions 179 and 226 each coordinate NAD(+). Arg-236 provides a ligand contact to glycine.

It belongs to the THI4 family. Homooctamer; tetramer of dimers. It depends on Fe(2+) as a cofactor.

It catalyses the reaction hydrogen sulfide + glycine + NAD(+) = ADP-5-ethyl-4-methylthiazole-2-carboxylate + nicotinamide + 3 H2O + H(+). It functions in the pathway cofactor biosynthesis; thiamine diphosphate biosynthesis. Involved in the biosynthesis of the thiazole moiety of thiamine. Catalyzes the conversion of NAD and glycine to adenosine diphosphate 5-(2-hydroxyethyl)-4-methylthiazole-2-carboxylate (ADT), an adenylated thiazole intermediate, using free sulfide as a source of sulfur. This chain is Thiamine thiazole synthase, found in Methanococcus vannielii (strain ATCC 35089 / DSM 1224 / JCM 13029 / OCM 148 / SB).